Here is a 465-residue protein sequence, read N- to C-terminus: Mitochondrial F-box protein MFB1 (465 aa).

In terms of domain architecture, F-box spans 14-60 (ERSLTNLPLNLLFRILSHLDMNDLQNIGKTCTLLRMLANENIVYRNA). A disordered region spans residues 253 to 279 (FTKSRDPDYKEMTPTSTESSDSITRLR). Residues 254-263 (TKSRDPDYKE) are compositionally biased toward basic and acidic residues. A compositionally biased stretch (polar residues) spans 265-275 (TPTSTESSDSI).

The protein localises to the mitochondrion. The polypeptide is Mitochondrial F-box protein MFB1 (MFB1) (Saccharomyces cerevisiae (strain ATCC 204508 / S288c) (Baker's yeast)).